Consider the following 266-residue polypeptide: 4-hydroxy-tetrahydrodipicolinate reductase (266 aa).

10-15 (GPRGRM) serves as a coordination point for NAD(+). An NADP(+)-binding site is contributed by lysine 38. NAD(+) contacts are provided by residues 99-101 (GTT) and 125-128 (APNF). Histidine 155 (proton donor/acceptor) is an active-site residue. Histidine 156 contacts (S)-2,3,4,5-tetrahydrodipicolinate. The active-site Proton donor is lysine 159. 165–166 (GT) lines the (S)-2,3,4,5-tetrahydrodipicolinate pocket.

The protein belongs to the DapB family.

The protein resides in the cytoplasm. It carries out the reaction (S)-2,3,4,5-tetrahydrodipicolinate + NAD(+) + H2O = (2S,4S)-4-hydroxy-2,3,4,5-tetrahydrodipicolinate + NADH + H(+). The enzyme catalyses (S)-2,3,4,5-tetrahydrodipicolinate + NADP(+) + H2O = (2S,4S)-4-hydroxy-2,3,4,5-tetrahydrodipicolinate + NADPH + H(+). It functions in the pathway amino-acid biosynthesis; L-lysine biosynthesis via DAP pathway; (S)-tetrahydrodipicolinate from L-aspartate: step 4/4. In terms of biological role, catalyzes the conversion of 4-hydroxy-tetrahydrodipicolinate (HTPA) to tetrahydrodipicolinate. The sequence is that of 4-hydroxy-tetrahydrodipicolinate reductase from Bacillus mycoides (strain KBAB4) (Bacillus weihenstephanensis).